Consider the following 259-residue polypeptide: Type III pantothenate kinase (259 aa).

An ATP-binding site is contributed by 6–13 (DCGNTNTL). Position 108–111 (108–111 (GADR)) interacts with substrate. Aspartate 110 functions as the Proton acceptor in the catalytic mechanism. Residue aspartate 130 coordinates K(+). An ATP-binding site is contributed by threonine 133. Threonine 185 serves as a coordination point for substrate.

The protein belongs to the type III pantothenate kinase family. In terms of assembly, homodimer. Requires NH4(+) as cofactor. It depends on K(+) as a cofactor.

It is found in the cytoplasm. It carries out the reaction (R)-pantothenate + ATP = (R)-4'-phosphopantothenate + ADP + H(+). The protein operates within cofactor biosynthesis; coenzyme A biosynthesis; CoA from (R)-pantothenate: step 1/5. Functionally, catalyzes the phosphorylation of pantothenate (Pan), the first step in CoA biosynthesis. This chain is Type III pantothenate kinase, found in Maricaulis maris (strain MCS10) (Caulobacter maris).